The following is a 46-amino-acid chain: Protein PsbN (46 aa).

The helical transmembrane segment at A7–Y27 threads the bilayer.

The protein belongs to the PsbN family.

The protein localises to the cellular thylakoid membrane. May play a role in photosystem I and II biogenesis. The chain is Protein PsbN from Synechococcus sp. (strain CC9605).